The chain runs to 246 residues: MAVQISKKRKFVADGIFKAELNEFLTRELAEDGYSGVEVRVTPTRTEIIILATRTQNVLGEKGRRIRELTAVVQKRFGFPEGSVELYAEKVATRGLCAIAQAESLRYKLLGGLAVRRACYGVLRFIMESGAKGCEVVVSGKLRGQRAKSMKFVDGLMIHSGDPVNYYVDTAVRHVLLRQGVLGIKVKIMLPWDPSGKIGPKKPLPDHVSIVEPKDEIVPTTPISEQKAAKPDQPQPPAMPQPVATA.

Residues Leu-21–Ala-92 enclose the KH type-2 domain. Residues Asp-215–Ala-246 form a disordered region.

Belongs to the universal ribosomal protein uS3 family.

The protein resides in the cytoplasm. The protein localises to the nucleus. It localises to the nucleolus. It is found in the mitochondrion inner membrane. Its subcellular location is the cytoskeleton. The protein resides in the spindle. It catalyses the reaction 2'-deoxyribonucleotide-(2'-deoxyribose 5'-phosphate)-2'-deoxyribonucleotide-DNA = a 3'-end 2'-deoxyribonucleotide-(2,3-dehydro-2,3-deoxyribose 5'-phosphate)-DNA + a 5'-end 5'-phospho-2'-deoxyribonucleoside-DNA + H(+). Its function is as follows. Component of the small ribosomal subunit. The ribosome is a large ribonucleoprotein complex responsible for the synthesis of proteins in the cell. Has endonuclease activity and plays a role in repair of damaged DNA. Also involved in other processes including regulation of transcription, translation of its cognate mRNA, spindle formation and chromosome movement during mitosis, and apoptosis. This chain is Small ribosomal subunit protein uS3A (rps3-a), found in Xenopus laevis (African clawed frog).